Here is a 391-residue protein sequence, read N- to C-terminus: Phosphoglycerate kinase (391 aa).

Substrate is bound by residues 21-23 (DLN), Arg-36, 59-62 (HLGR), Arg-113, and Arg-146. ATP contacts are provided by residues Lys-197, Glu-319, and 345 to 348 (GGDT).

This sequence belongs to the phosphoglycerate kinase family. Monomer.

The protein localises to the cytoplasm. It catalyses the reaction (2R)-3-phosphoglycerate + ATP = (2R)-3-phospho-glyceroyl phosphate + ADP. It functions in the pathway carbohydrate degradation; glycolysis; pyruvate from D-glyceraldehyde 3-phosphate: step 2/5. The protein is Phosphoglycerate kinase of Xylella fastidiosa (strain Temecula1 / ATCC 700964).